The sequence spans 532 residues: Berberine bridge enzyme-like 23 (532 aa).

Residues 1 to 22 (MRTLEAFALSLFLVFLVKWVNS) form the signal peptide. C36 and C102 are oxidised to a cystine. N-linked (GlcNAc...) asparagine glycosylation is present at N78. In terms of domain architecture, FAD-binding PCMH-type spans 80 to 256 (TSQKPILIVT…LSWKVKLVRV (177 aa)). The 6-(S-cysteinyl)-8alpha-(pros-histidyl)-FAD (His-Cys) cross-link spans 117-180 (HDYEGLSYLS…KIHGFPAGTC (64 aa)). N-linked (GlcNAc...) asparagine glycosylation is found at N272 and N487.

Belongs to the oxygen-dependent FAD-linked oxidoreductase family. Requires FAD as cofactor. Post-translationally, the FAD cofactor is bound via a bicovalent 6-S-cysteinyl, 8alpha-N1-histidyl FAD linkage. In terms of tissue distribution, accumulates in cell walls of etiolated hypocotyls.

Its subcellular location is the secreted. It localises to the cell wall. The sequence is that of Berberine bridge enzyme-like 23 from Arabidopsis thaliana (Mouse-ear cress).